The sequence spans 203 residues: Histidine biosynthesis bifunctional protein HisIE (203 aa).

A phosphoribosyl-AMP cyclohydrolase region spans residues 1–114; the sequence is MLTEQQRREL…FGDTAHQWLF (114 aa). Residues 115 to 203 are phosphoribosyl-ATP pyrophosphohydrolase; the sequence is LYQLEQLLAE…VIENLRKRHQ (89 aa).

In the N-terminal section; belongs to the PRA-CH family. It in the C-terminal section; belongs to the PRA-PH family.

The protein localises to the cytoplasm. It catalyses the reaction 1-(5-phospho-beta-D-ribosyl)-ATP + H2O = 1-(5-phospho-beta-D-ribosyl)-5'-AMP + diphosphate + H(+). It carries out the reaction 1-(5-phospho-beta-D-ribosyl)-5'-AMP + H2O = 1-(5-phospho-beta-D-ribosyl)-5-[(5-phospho-beta-D-ribosylamino)methylideneamino]imidazole-4-carboxamide. The protein operates within amino-acid biosynthesis; L-histidine biosynthesis; L-histidine from 5-phospho-alpha-D-ribose 1-diphosphate: step 2/9. Its pathway is amino-acid biosynthesis; L-histidine biosynthesis; L-histidine from 5-phospho-alpha-D-ribose 1-diphosphate: step 3/9. This is Histidine biosynthesis bifunctional protein HisIE from Shigella sonnei (strain Ss046).